Here is a 309-residue protein sequence, read N- to C-terminus: Protoheme IX farnesyltransferase 2 (309 aa).

8 helical membrane passes run 35 to 55, 59 to 79, 107 to 127, 131 to 151, 159 to 179, 186 to 206, 238 to 258, and 289 to 309; these read FKVV…APDV, MGVQ…AAVI, AHAL…LMLW, LTAI…TSFL, IVIG…SETG, WLLV…LAIA, LLAI…IYLI, and FSII…WLLL.

This sequence belongs to the UbiA prenyltransferase family. Protoheme IX farnesyltransferase subfamily.

The protein resides in the cell inner membrane. It catalyses the reaction heme b + (2E,6E)-farnesyl diphosphate + H2O = Fe(II)-heme o + diphosphate. The protein operates within porphyrin-containing compound metabolism; heme O biosynthesis; heme O from protoheme: step 1/1. Converts heme B (protoheme IX) to heme O by substitution of the vinyl group on carbon 2 of heme B porphyrin ring with a hydroxyethyl farnesyl side group. The polypeptide is Protoheme IX farnesyltransferase 2 (Pseudoalteromonas translucida (strain TAC 125)).